The following is a 317-amino-acid chain: Melanocyte-stimulating hormone receptor (317 aa).

Over 1–37 the chain is Extracellular; it reads MPVQGSQRRLLGSLNSTPTATPHLGLAANQTGARCLE. N-linked (GlcNAc...) asparagine glycosylation is present at Asn-29. Residues 38 to 63 form a helical membrane-spanning segment; sequence VSIPDGLFLSLGLVSLVENVLVVTAI. Residues 64–72 are Cytoplasmic-facing; the sequence is AKNRNLHSP. A helical transmembrane segment spans residues 73–93; that stretch reads MYCFICCLALSDLLVSGSNML. The Extracellular portion of the chain corresponds to 94–118; it reads ETAVILLLEAGALAARAAVVQQLDN. Residues 119-140 form a helical membrane-spanning segment; the sequence is VIDVITCSSMLASLCFLGAIAV. Over 141–163 the chain is Cytoplasmic; the sequence is DRYISIFYALRYHSIVTLPRARR. Residues 164–183 form a helical membrane-spanning segment; that stretch reads AVAAIWVASVLFSMLFIAYY. Residues 184 to 191 are Extracellular-facing; sequence DHAAVLLC. A helical membrane pass occupies residues 192-211; that stretch reads LVVFFLAMLVLMAVLYIHML. At 212–240 the chain is on the cytoplasmic side; it reads ARARQHAQGIARLHKRQCPAHQGFGLKGA. Residues 241 to 266 form a helical membrane-spanning segment; it reads ATLTILLGIFFLCWGPFFLHLTLIVL. Over 267–279 the chain is Extracellular; the sequence is CPQHPTCSCIFKN. A helical membrane pass occupies residues 280–300; it reads FNLFLALIICNAIIDPLIYAF. The Cytoplasmic segment spans residues 301-317; it reads RSQELRRTLKEVLLCSW. A lipid anchor (S-palmitoyl cysteine) is attached at Cys-315.

The protein belongs to the G-protein coupled receptor 1 family. In terms of assembly, interacts with MGRN1, but does not undergo MGRN1-mediated ubiquitination; this interaction competes with GNAS-binding and thus inhibits agonist-induced cAMP production. Interacts with OPN3; the interaction results in a decrease in MC1R-mediated cAMP signaling and ultimately a decrease in melanin production in melanocytes.

It localises to the cell membrane. In terms of biological role, receptor for MSH (alpha, beta and gamma) and ACTH. The activity of this receptor is mediated by G proteins which activate adenylate cyclase. Mediates melanogenesis, the production of eumelanin (black/brown) and phaeomelanin (red/yellow), via regulation of cAMP signaling in melanocytes. This is Melanocyte-stimulating hormone receptor (MC1R) from Cercopithecus mitis (Blue monkey).